A 202-amino-acid chain; its full sequence is GTP cyclohydrolase 1 (202 aa).

Zn(2+) contacts are provided by Cys93, His96, and Cys164.

It belongs to the GTP cyclohydrolase I family. As to quaternary structure, toroid-shaped homodecamer, composed of two pentamers of five dimers.

The enzyme catalyses GTP + H2O = 7,8-dihydroneopterin 3'-triphosphate + formate + H(+). Its pathway is cofactor biosynthesis; 7,8-dihydroneopterin triphosphate biosynthesis; 7,8-dihydroneopterin triphosphate from GTP: step 1/1. The polypeptide is GTP cyclohydrolase 1 (Pelagibacter ubique (strain HTCC1062)).